A 244-amino-acid chain; its full sequence is Small ribosomal subunit protein uS2 (244 aa).

This sequence belongs to the universal ribosomal protein uS2 family.

This chain is Small ribosomal subunit protein uS2, found in Psychromonas ingrahamii (strain DSM 17664 / CCUG 51855 / 37).